Consider the following 184-residue polypeptide: Ras-related protein O-Krev (184 aa).

Position 10 to 17 (Gly10 to Ser17) interacts with GTP. The short motif at Tyr32–Tyr40 is the Effector region element. GTP is bound by residues Asp57–Thr61 and Asn116–Asp119. Cys181 carries the post-translational modification Cysteine methyl ester. A lipid anchor (S-geranylgeranyl cysteine) is attached at Cys181. A propeptide spans Thr182 to Leu184 (removed in mature form).

This sequence belongs to the small GTPase superfamily. Ras family.

The protein localises to the cell membrane. It catalyses the reaction GTP + H2O = GDP + phosphate + H(+). This Diplobatis ommata (Ocellated electric ray) protein is Ras-related protein O-Krev.